Consider the following 554-residue polypeptide: ATP synthase subunit alpha (554 aa).

172 to 179 (GDRKTGKT) contributes to the ATP binding site. The disordered stretch occupies residues 528-554 (LDEEELEKESVKVKKPAPEKKAKKEQK). A compositionally biased stretch (basic and acidic residues) spans 535–554 (KESVKVKKPAPEKKAKKEQK).

It belongs to the ATPase alpha/beta chains family. In terms of assembly, F-type ATPases have 2 components, CF(1) - the catalytic core - and CF(0) - the membrane proton channel. CF(1) has five subunits: alpha(3), beta(3), gamma(1), delta(1), epsilon(1). CF(0) has three main subunits: a(1), b(2) and c(9-12). The alpha and beta chains form an alternating ring which encloses part of the gamma chain. CF(1) is attached to CF(0) by a central stalk formed by the gamma and epsilon chains, while a peripheral stalk is formed by the delta and b chains.

It localises to the cell membrane. The catalysed reaction is ATP + H2O + 4 H(+)(in) = ADP + phosphate + 5 H(+)(out). In terms of biological role, produces ATP from ADP in the presence of a proton gradient across the membrane. The alpha chain is a regulatory subunit. This chain is ATP synthase subunit alpha, found in Mycolicibacterium paratuberculosis (strain ATCC BAA-968 / K-10) (Mycobacterium paratuberculosis).